Consider the following 271-residue polypeptide: Mannosyl-3-phosphoglycerate phosphatase (271 aa).

Catalysis depends on D13, which acts as the Nucleophile. 3 residues coordinate Mg(2+): D13, D15, and D214.

This sequence belongs to the HAD-like hydrolase superfamily. MPGP family. It depends on Mg(2+) as a cofactor.

It localises to the cytoplasm. It carries out the reaction 2-O-(alpha-D-mannosyl)-3-phosphoglycerate + H2O = (2R)-2-O-(alpha-D-mannosyl)-glycerate + phosphate. This Escherichia coli O157:H7 protein is Mannosyl-3-phosphoglycerate phosphatase (yedP).